Reading from the N-terminus, the 117-residue chain is Ribosome-binding factor A (117 aa).

The protein belongs to the RbfA family. As to quaternary structure, monomer. Binds 30S ribosomal subunits, but not 50S ribosomal subunits or 70S ribosomes.

It is found in the cytoplasm. In terms of biological role, one of several proteins that assist in the late maturation steps of the functional core of the 30S ribosomal subunit. Associates with free 30S ribosomal subunits (but not with 30S subunits that are part of 70S ribosomes or polysomes). Required for efficient processing of 16S rRNA. May interact with the 5'-terminal helix region of 16S rRNA. In Blochmanniella floridana, this protein is Ribosome-binding factor A.